Here is a 134-residue protein sequence, read N- to C-terminus: Mini-ribonuclease 3 (134 aa).

The active site involves Asp-23.

It belongs to the MrnC RNase family. Homodimer. The cofactor is Mg(2+).

The protein resides in the cytoplasm. Functionally, involved in correct processing of both the 5' and 3' ends of 23S rRNA precursor. Processes 30S rRNA precursor transcript even in absence of ribonuclease 3 (Rnc); Rnc processes 30S rRNA into smaller rRNA precursors. This Brevibacillus brevis (strain 47 / JCM 6285 / NBRC 100599) protein is Mini-ribonuclease 3.